We begin with the raw amino-acid sequence, 468 residues long: MLGTVKMEGHESNDWNSYYADTQEAYSSVPVSNMNSGLGSMNSMNTYMTMNTMTTSGNMTPASFNMSYANTGLGAGLSPGAVAGMPGASAGAMNSMTAAGVTAMGTALSPGGMGSMGAQPATSMNGLGPYAAAMNPCMSPMAYAPSNLGRSRAGGGGDAKTFKRSYPHAKPPYSYISLITMAIQQAPSKMLTLSEIYQWIMDLFPYYRQNQQRWQNSIRHSLSFNDCFVKVARSPDKPGKGSYWTLHPDSGNMFENGCYLRRQKRFKCEKQPGAGGGSGGGGSKGGPESRKDPSGPGNPSAESPLHRGVHGKASQLEGAPAPGPAASPQTLDHSGATATGGASELKSPASSSAPPISSGPGALASVPPSHPAHGLAPHESQLHLKGDPHYSFNHPFSINNLMSSSEQQHKLDFKAYEQALQYSPYGATLPASLPLGSASVATRSPIEPSALEPAYYQGVYSRPVLNTS.

Positions 169-260 (AKPPYSYISL…GNMFENGCYL (92 aa)) form a DNA-binding region, fork-head. An essential for DNA binding region spans residues 251-288 (GNMFENGCYLRRQKRFKCEKQPGAGGGSGGGGSKGGPE). The disordered stretch occupies residues 269-396 (EKQPGAGGGS…DPHYSFNHPF (128 aa)). The span at 273–285 (GAGGGSGGGGSKG) shows a compositional bias: gly residues. Residues S303 and S327 each carry the phosphoserine modification. Low complexity-rich tracts occupy residues 318–328 (GAPAPGPAASP) and 347–365 (SPAS…ALAS).

In terms of assembly, binds DNA as a monomer. Interacts with FOXA2. Interacts with NKX2-1. Interacts with HDAC7. Interacts with the histone H3-H4 heterodimer. Associates with nucleosomes containing histone H2A. Interacts with AR. Interacts with NR0B2. Restricted mainly to endoderm-derived tissues (lung, liver, stomach, and small intestine). Expressed in the prostate.

The protein localises to the nucleus. Transcription factor that is involved in embryonic development, establishment of tissue-specific gene expression and regulation of gene expression in differentiated tissues. Is thought to act as a 'pioneer' factor opening the compacted chromatin for other proteins through interactions with nucleosomal core histones and thereby replacing linker histones at target enhancer and/or promoter sites. Binds DNA with the consensus sequence 5'-[AC]A[AT]T[AG]TT[GT][AG][CT]T[CT]-3'. Proposed to play a role in translating the epigenetic signatures into cell type-specific enhancer-driven transcriptional programs. Involved in the development of multiple endoderm-derived organ systems such as the liver, pancreas, lungs and prostate; FOXA1 and FOXA2 seem to have at least in part redundant roles. Plays a role in prostate morphogenesis and epithelial cell differentiation. FOXA1 and FOXA2 are essential for hepatic specification. FOXA1 and FOXA2 are required for morphogenesis and cell differentiation during formation of the lung. FOXA1 and FOXA2 are involved in bile duct formation; they positively regulate the binding of glucocorticoid receptor/NR3C1 to the IL6 promoter. FOXA1 and FOXA2 regulate multiple phases of midbrain dopaminergic neuron development; they regulate expression of NEUROG2 at the beginning of mDA neurogenesis and of NR4A2 and EN1 in immature mDA neurons. Modulates the transcriptional activity of nuclear hormone receptors. Is involved in ESR1-mediated transcription. Inhibits NKX2-1-mediated transcription from the SFTPC promoter in lung epithel independently from DNA-binding. Involved in regulation of apoptosis. Involved in cell cycle regulation. Originally described as a transcription activator for a number of liver genes such as AFP, albumin, tyrosine aminotransferase, PEPCK, etc. Interacts with the cis-acting regulatory regions of these genes. Involved in glucose homeostasis; activates the GCG promoter. This chain is Hepatocyte nuclear factor 3-alpha (Foxa1), found in Mus musculus (Mouse).